The chain runs to 501 residues: Lysine--tRNA ligase (501 aa).

Mg(2+) is bound by residues glutamate 406 and glutamate 413.

It belongs to the class-II aminoacyl-tRNA synthetase family. As to quaternary structure, homodimer. Mg(2+) is required as a cofactor.

It localises to the cytoplasm. The catalysed reaction is tRNA(Lys) + L-lysine + ATP = L-lysyl-tRNA(Lys) + AMP + diphosphate. The sequence is that of Lysine--tRNA ligase (lysS) from Halalkalibacterium halodurans (strain ATCC BAA-125 / DSM 18197 / FERM 7344 / JCM 9153 / C-125) (Bacillus halodurans).